Here is a 247-residue protein sequence, read N- to C-terminus: UDP-2,3-diacylglucosamine hydrolase (247 aa).

5 residues coordinate Mn(2+): aspartate 8, histidine 10, aspartate 41, asparagine 79, and histidine 114. Substrate is bound at residue 79-80 (NR). The substrate site is built by aspartate 122, serine 160, aspartate 171, glutamine 174, and histidine 202. Mn(2+) contacts are provided by histidine 202 and histidine 204.

Belongs to the LpxH family. It depends on Mn(2+) as a cofactor.

The protein localises to the cell inner membrane. The catalysed reaction is UDP-2-N,3-O-bis[(3R)-3-hydroxytetradecanoyl]-alpha-D-glucosamine + H2O = 2-N,3-O-bis[(3R)-3-hydroxytetradecanoyl]-alpha-D-glucosaminyl 1-phosphate + UMP + 2 H(+). Its pathway is glycolipid biosynthesis; lipid IV(A) biosynthesis; lipid IV(A) from (3R)-3-hydroxytetradecanoyl-[acyl-carrier-protein] and UDP-N-acetyl-alpha-D-glucosamine: step 4/6. Hydrolyzes the pyrophosphate bond of UDP-2,3-diacylglucosamine to yield 2,3-diacylglucosamine 1-phosphate (lipid X) and UMP by catalyzing the attack of water at the alpha-P atom. Involved in the biosynthesis of lipid A, a phosphorylated glycolipid that anchors the lipopolysaccharide to the outer membrane of the cell. The chain is UDP-2,3-diacylglucosamine hydrolase from Xanthomonas campestris pv. campestris (strain B100).